The following is a 258-amino-acid chain: MYFQNSTQLGWWFLAELIGTFILIIFGNGAVAQVNLKKMATSETKAKFLTVALTWGIGVLFGVLTANAIFKGSGHLNPAISLFYAINGSIKSPTALIWPGFVIGILAQFLGAMIAQTTLNFLFWKQLSSTDPQTVLAMHCTSPSVFNITRNFLTEFIATLILIGGVVAASHFLHNNPNSVPPGFMGLWLVAGIIIAFGGATGSAINPARDLGTRIVFQLTPIKNKDANWKYSWIPVIAPLSAGLVLSIIIGFSPAPVL.

2 helical membrane-spanning segments follow: residues 11–31 and 50–70; these read WWFL…NGAV and TVAL…NAIF. The NPA 1 signature appears at 77-79; it reads NPA. 3 helical membrane-spanning segments follow: residues 95–115, 152–172, and 180–200; these read ALIW…AMIA, FLTE…ASHF, and VPPG…FGGA. Residues 206-208 carry the NPA 2 motif; it reads NPA. The helical transmembrane segment at 233 to 253 threads the bilayer; the sequence is WIPVIAPLSAGLVLSIIIGFS.

This sequence belongs to the MIP/aquaporin (TC 1.A.8) family.

It localises to the cell membrane. It catalyses the reaction glycerol(in) = glycerol(out). Its function is as follows. Mediates glycerol diffusion across the cytoplasmic membrane via a pore-type mechanism. In Mycoplasma genitalium (strain ATCC 33530 / DSM 19775 / NCTC 10195 / G37) (Mycoplasmoides genitalium), this protein is Probable glycerol uptake facilitator protein (glpF).